Consider the following 585-residue polypeptide: Ankyrin repeat protein OPG003 (585 aa).

ANK repeat units follow at residues cysteine 66 to asparagine 98, aspartate 172 to alanine 220, isoleucine 224 to isoleucine 256, glutamate 297 to glutamate 333, and asparagine 336 to leucine 365. The segment at leucine 554–leucine 571 is PRANC/F-box-like.

Belongs to the orthopoxvirus OPG003 family.

Its function is as follows. May be involved in virus-host protein interaction through the ankyrin repeats and PRANC regions. This is Ankyrin repeat protein OPG003 (OPG003) from Homo sapiens (Human).